The sequence spans 249 residues: Isoprenyl transferase (249 aa).

Asp25 is an active-site residue. Asp25 contacts Mg(2+). Residues 26–29, Trp30, Arg38, His42, and 70–72 each bind substrate; these read GNGR and STE. The Proton acceptor role is filled by Asn73. Substrate is bound by residues Trp74, Arg76, Arg197, and 203 to 205; that span reads RLS. Glu216 serves as a coordination point for Mg(2+).

Belongs to the UPP synthase family. As to quaternary structure, homodimer. Mg(2+) serves as cofactor.

Functionally, catalyzes the condensation of isopentenyl diphosphate (IPP) with allylic pyrophosphates generating different type of terpenoids. This chain is Isoprenyl transferase, found in Streptococcus pyogenes serotype M6 (strain ATCC BAA-946 / MGAS10394).